We begin with the raw amino-acid sequence, 731 residues long: Putative beta-galactosidase (731 aa).

The N-terminal stretch at 1-29 (MLCGKENNVMKMMLVYVFVLITLISCVYG) is a signal peptide. The active-site Proton donor is the Glu187. The active-site Nucleophile is Glu257.

It belongs to the glycosyl hydrolase 35 family. Senescing flower petals.

The enzyme catalyses Hydrolysis of terminal non-reducing beta-D-galactose residues in beta-D-galactosides.. This Dianthus caryophyllus (Carnation) protein is Putative beta-galactosidase (CARSR12).